Consider the following 217-residue polypeptide: GRB2-related adapter protein (217 aa).

The SH3 1 domain maps to 1 to 58 (MESVALYSFQATESDELAFNKGDTLKILNMEDDQNWYKAELRGVEGFIPKNYIRVKPH). One can recognise an SH2 domain in the interval 60–154 (WYSGRISRQL…QIFLRDEEPL (95 aa)). Positions 158 to 217 (PGACFAQAQFDFSAQDPSQLSFRRGDIIEVLERPDPHWWRGRSCGRVGFFPRSYVQPVHL) constitute an SH3 2 domain.

The protein belongs to the GRB2/sem-5/DRK family. As to quaternary structure, associates through its SH2 domain with ligand-activated receptors for stem cell factor (KIT) and erythropoietin (EPOR). Also forms a stable complex with the Bcr-Abl oncoprotein. GRAP is associated with the Ras guanine nucleotide exchange factor SOS1, primarily through its N-terminal SH3 domain. Interacts with phosphorylated LAT upon TCR activation. Interacts with SHB.

It is found in the membrane. Its subcellular location is the synapse. Functionally, couples signals from receptor and cytoplasmic tyrosine kinases to the Ras signaling pathway. Plays a role in the inner ear and in hearing. The protein is GRB2-related adapter protein of Homo sapiens (Human).